A 310-amino-acid polypeptide reads, in one-letter code: MKKNNYKIVSLYSFFSFQENSIIELKQNLLRIEKENDLSGLLIIASEGINGTICAEEKIIENILNLIKNIVGNNQLNIKVSYSKEKIFKKLKLKIKNEIVTMGVPEINPLEDAGTYIDSFNWNKLIKDKDTIVIDTRNHYEVSIGSFKKSINPNTKNFSEFPQWVDNNLDNHLGNENSKNIAMFCTGGIRCEKATTLLKNKGYKNIFHLKGGILKYLEDISKEESLFEGECFVFDKRVALDHELKKGSYSICHACGMPISIEDQTKVEYIEGIQCHFCINKFTDEDRKRFEERQKQINKLKVKNQEISNN.

Positions 127–225 (KDKDTIVIDT…YLEDISKEES (99 aa)) constitute a Rhodanese domain. Residue C185 is the Cysteine persulfide intermediate of the active site.

Belongs to the TrhO family.

The enzyme catalyses uridine(34) in tRNA + AH2 + O2 = 5-hydroxyuridine(34) in tRNA + A + H2O. Its function is as follows. Catalyzes oxygen-dependent 5-hydroxyuridine (ho5U) modification at position 34 in tRNAs. This chain is tRNA uridine(34) hydroxylase, found in Prochlorococcus marinus (strain MIT 9515).